Here is a 201-residue protein sequence, read N- to C-terminus: Cutinase (201 aa).

The N-terminal stretch at 1–20 (MKTSAQQLLSLLLLPLSAIA) is a signal peptide. A disulfide bridge connects residues Cys31 and Cys105. The Nucleophile role is filled by Ser116. A disulfide bridge connects residues Cys164 and Cys171. Asp168 is an active-site residue. Catalysis depends on His181, which acts as the Proton donor/acceptor.

Belongs to the cutinase family. Post-translationally, the 2 disulfide bonds play a critical role in holding the catalytic residues in juxta-position; reduction of the disulfide bridges results in the complete inactivation of the enzyme.

It localises to the secreted. The catalysed reaction is cutin + H2O = cutin monomers.. Functionally, catalyzes the hydrolysis of complex carboxylic polyesters found in the cell wall of plants. Degrades cutin, a macromolecule that forms the structure of the plant cuticle. Allows pathogenic fungi to penetrate through the cuticular barrier into the host plant during the initial stage of fungal infection. This is Cutinase (CUT1) from Monilinia fructicola (Brown rot fungus).